An 85-amino-acid polypeptide reads, in one-letter code: Alpha-insect toxin Bot14 (85 aa).

The signal sequence occupies residues 1–18 (MSSLMISTAMKGKAPYRQ). Positions 20–84 (RDGYIAQPHN…GIIVHGEKCH (65 aa)) constitute an LCN-type CS-alpha/beta domain. 4 cysteine pairs are disulfide-bonded: Cys30-Cys83, Cys34-Cys55, Cys41-Cys65, and Cys45-Cys67.

It belongs to the long (4 C-C) scorpion toxin superfamily. Sodium channel inhibitor family. Alpha subfamily. As to expression, expressed by the venom gland.

It is found in the secreted. Alpha toxins bind voltage-independently at site-3 of sodium channels (Nav) and inhibit the inactivation of the activated channels, thereby blocking neuronal transmission. This toxin is active only on insects. The sequence is that of Alpha-insect toxin Bot14 from Buthus occitanus tunetanus (Common European scorpion).